The sequence spans 917 residues: Phosphoenolpyruvate carboxylase (917 aa).

Catalysis depends on residues His-145 and Lys-578.

The protein belongs to the PEPCase type 1 family. The cofactor is Mg(2+).

It catalyses the reaction oxaloacetate + phosphate = phosphoenolpyruvate + hydrogencarbonate. Forms oxaloacetate, a four-carbon dicarboxylic acid source for the tricarboxylic acid cycle. The sequence is that of Phosphoenolpyruvate carboxylase from Azoarcus sp. (strain BH72).